A 116-amino-acid polypeptide reads, in one-letter code: Putative oxygen-evolving enhancer protein 1 (116 aa).

Belongs to the PsbO family.

The protein resides in the plastid. It localises to the chloroplast thylakoid membrane. Functionally, stabilizes the manganese cluster which is the primary site of water splitting. The chain is Putative oxygen-evolving enhancer protein 1 from Pinus strobus (Eastern white pine).